Consider the following 204-residue polypeptide: Holliday junction branch migration complex subunit RuvA (204 aa).

Positions 1–63 (MIGKLSGKVD…EEHIHLYGFL (63 aa)) are domain I. The domain II stretch occupies residues 64-142 (TLEEKIFFNL…KISSGSAIIK (79 aa)). Residues 143–149 (ESLNIKN) are flexible linker. The tract at residues 150-204 (ITPVASNEVIKALVNLGFSRFEAQNAVQGIITQNPEISIDELIKTALKNRNSNFS) is domain III.

Belongs to the RuvA family. Homotetramer. Forms an RuvA(8)-RuvB(12)-Holliday junction (HJ) complex. HJ DNA is sandwiched between 2 RuvA tetramers; dsDNA enters through RuvA and exits via RuvB. An RuvB hexamer assembles on each DNA strand where it exits the tetramer. Each RuvB hexamer is contacted by two RuvA subunits (via domain III) on 2 adjacent RuvB subunits; this complex drives branch migration. In the full resolvosome a probable DNA-RuvA(4)-RuvB(12)-RuvC(2) complex forms which resolves the HJ.

The protein resides in the cytoplasm. The RuvA-RuvB-RuvC complex processes Holliday junction (HJ) DNA during genetic recombination and DNA repair, while the RuvA-RuvB complex plays an important role in the rescue of blocked DNA replication forks via replication fork reversal (RFR). RuvA specifically binds to HJ cruciform DNA, conferring on it an open structure. The RuvB hexamer acts as an ATP-dependent pump, pulling dsDNA into and through the RuvAB complex. HJ branch migration allows RuvC to scan DNA until it finds its consensus sequence, where it cleaves and resolves the cruciform DNA. This is Holliday junction branch migration complex subunit RuvA from Rickettsia rickettsii (strain Iowa).